Here is a 575-residue protein sequence, read N- to C-terminus: Glutathione/L-cysteine transport system ATP-binding/permease protein CydD (575 aa).

Transmembrane regions (helical) follow at residues 17–37 (LFVL…FLMF), 53–73 (ILLI…RSVS), 135–155 (IFPA…LGFF), 161–181 (ILLA…SLLV), 246–266 (FAAQ…TAGQ), and 275–295 (TMIA…LPLS). The region spanning 19–303 (VLVIFLGAVT…LSDALGEVPG (285 aa)) is the ABC transmembrane type-1 domain. The ABC transporter domain maps to 337-570 (LAFRDVTFSY…NERYRRLYHL (234 aa)). 370–377 (GRSGSGKS) contributes to the ATP binding site.

Belongs to the ABC transporter superfamily. Cysteine exporter (TC 3.A.1.129.1) family. Forms a heterodimer with CydC.

The protein resides in the cell membrane. It carries out the reaction L-cysteine(in) + ATP + H2O = L-cysteine(out) + ADP + phosphate + H(+). The catalysed reaction is glutathione(in) + ATP + H2O = glutathione(out) + ADP + phosphate + H(+). Its function is as follows. Part of the ABC transporter complex CydDC that exports the reduced low-molecular-weight thiols cysteine and glutathione from the cell. Export of these thiol-containing redox-active molecules may be crucial for redox homeostasis, permitting correct assembly of various respiratory complexes and formation of correct disulfide bonds in secreted proteins. CydD contains transmembrane domains (TMD), which form a pore in the membrane, and an ATP-binding domain (NBD), which is responsible for energy generation. The polypeptide is Glutathione/L-cysteine transport system ATP-binding/permease protein CydD (cydD) (Bacillus subtilis (strain 168)).